The chain runs to 88 residues: Large ribosomal subunit protein bL31B (88 aa).

Belongs to the bacterial ribosomal protein bL31 family. Type B subfamily. In terms of assembly, part of the 50S ribosomal subunit.

In Paraburkholderia phytofirmans (strain DSM 17436 / LMG 22146 / PsJN) (Burkholderia phytofirmans), this protein is Large ribosomal subunit protein bL31B.